The sequence spans 228 residues: Spore wall protein 12 (228 aa).

An N-linked (GlcNAc...) asparagine glycan is attached at N117.

Belongs to the SWP12 family.

It localises to the spore wall. In Nosema bombycis (strain CQ1 / CVCC 102059) (Microsporidian parasite), this protein is Spore wall protein 12 (SWP12).